Reading from the N-terminus, the 475-residue chain is ATP synthase subunit beta (475 aa).

Residue 156–163 (GGAGVGKT) participates in ATP binding.

It belongs to the ATPase alpha/beta chains family. As to quaternary structure, F-type ATPases have 2 components, CF(1) - the catalytic core - and CF(0) - the membrane proton channel. CF(1) has five subunits: alpha(3), beta(3), gamma(1), delta(1), epsilon(1). CF(0) has three main subunits: a(1), b(2) and c(9-12). The alpha and beta chains form an alternating ring which encloses part of the gamma chain. CF(1) is attached to CF(0) by a central stalk formed by the gamma and epsilon chains, while a peripheral stalk is formed by the delta and b chains.

It is found in the cell membrane. The enzyme catalyses ATP + H2O + 4 H(+)(in) = ADP + phosphate + 5 H(+)(out). Functionally, produces ATP from ADP in the presence of a proton gradient across the membrane. The catalytic sites are hosted primarily by the beta subunits. The protein is ATP synthase subunit beta of Mycoplasma pneumoniae (strain ATCC 29342 / M129 / Subtype 1) (Mycoplasmoides pneumoniae).